Reading from the N-terminus, the 126-residue chain is MASYNRTRRIAEEIRKVVSTMLINGVKDPRITSMVSVTDVEVTNDLRYAYVYVSILGGDEESTLTGLKSAGGYIRREVGKNIKLRYIPEIVFKLDDSIEKGMYMDSLIKRVNEKNAQQNEDENYDE.

The protein belongs to the RbfA family. In terms of assembly, monomer. Binds 30S ribosomal subunits, but not 50S ribosomal subunits or 70S ribosomes.

It is found in the cytoplasm. Functionally, one of several proteins that assist in the late maturation steps of the functional core of the 30S ribosomal subunit. Associates with free 30S ribosomal subunits (but not with 30S subunits that are part of 70S ribosomes or polysomes). Required for efficient processing of 16S rRNA. May interact with the 5'-terminal helix region of 16S rRNA. This chain is Ribosome-binding factor A, found in Clostridioides difficile (strain 630) (Peptoclostridium difficile).